A 468-amino-acid chain; its full sequence is Argininosuccinate lyase (468 aa).

Positions 33, 121, and 166 each coordinate 2-(N(omega)-L-arginino)succinate. Histidine 167 acts as the Proton acceptor in catalysis. The active-site Proton donor is the serine 288. Residues asparagine 296, tyrosine 328, glutamine 333, and lysine 336 each coordinate 2-(N(omega)-L-arginino)succinate.

Belongs to the lyase 1 family. Argininosuccinate lyase subfamily. Homotetramer.

It catalyses the reaction 2-(N(omega)-L-arginino)succinate = fumarate + L-arginine. It functions in the pathway amino-acid biosynthesis; L-arginine biosynthesis; L-arginine from L-ornithine and carbamoyl phosphate: step 3/3. The polypeptide is Argininosuccinate lyase (ARG4) (Candida albicans (Yeast)).